The following is a 560-amino-acid chain: Mannosyl-oligosaccharide 1,2-alpha-mannosidase MNS1 (560 aa).

The Cytoplasmic segment spans residues 1–27 (MARSRSISGYGIWKYLNPAYYLRRPRR). The chain crosses the membrane as a helical; Signal-anchor for type II membrane protein span at residues 28 to 47 (LALLFIVFVSVSMLVWDRIN). Residues 47-80 (NLAREHEVEVFKLNEEVSRLEQMLEELNGGVGNK) adopt a coiled-coil conformation. Over 48-560 (LAREHEVEVF…QRKFGHQINV (513 aa)) the chain is Lumenal. The active-site Proton donor is Glu-179. Residue Asp-312 is part of the active site. Asn-326 carries an N-linked (GlcNAc...) asparagine glycan. Residues Cys-377 and Cys-409 are joined by a disulfide bond. The active-site Proton donor is Glu-423. The active site involves Glu-445. A glycan (N-linked (GlcNAc...) asparagine) is linked at Asn-459. A Ca(2+)-binding site is contributed by Thr-529.

It belongs to the glycosyl hydrolase 47 family. It depends on Ca(2+) as a cofactor. The cofactor is Mn(2+). Mg(2+) serves as cofactor. As to expression, expressed in flowers, siliques, stems, leaves, roots, pollen grains, shoot apical meristems, hypocotyls and upper region of the root.

The protein resides in the golgi apparatus membrane. It catalyses the reaction N(4)-(alpha-D-Man-(1-&gt;2)-alpha-D-Man-(1-&gt;2)-alpha-D-Man-(1-&gt;3)-[alpha-D-Man-(1-&gt;2)-alpha-D-Man-(1-&gt;3)-[alpha-D-Man-(1-&gt;2)-alpha-D-Man-(1-&gt;6)]-alpha-D-Man-(1-&gt;6)]-beta-D-Man-(1-&gt;4)-beta-D-GlcNAc-(1-&gt;4)-beta-D-GlcNAc)-L-asparaginyl-[protein] (N-glucan mannose isomer 9A1,2,3B1,2,3) + 4 H2O = N(4)-(alpha-D-Man-(1-&gt;3)-[alpha-D-Man-(1-&gt;3)-[alpha-D-Man-(1-&gt;6)]-alpha-D-Man-(1-&gt;6)]-beta-D-Man-(1-&gt;4)-beta-D-GlcNAc-(1-&gt;4)-beta-D-GlcNAc)-L-asparaginyl-[protein] (N-glucan mannose isomer 5A1,2) + 4 beta-D-mannose. The enzyme catalyses N(4)-(alpha-D-Man-(1-&gt;2)-alpha-D-Man-(1-&gt;2)-alpha-D-Man-(1-&gt;3)-[alpha-D-Man-(1-&gt;3)-[alpha-D-Man-(1-&gt;2)-alpha-D-Man-(1-&gt;6)]-alpha-D-Man-(1-&gt;6)]-beta-D-Man-(1-&gt;4)-beta-D-GlcNAc-(1-&gt;4)-beta-D-GlcNAc)-L-asparaginyl-[protein] (N-glucan mannose isomer 8A1,2,3B1,3) + 3 H2O = N(4)-(alpha-D-Man-(1-&gt;3)-[alpha-D-Man-(1-&gt;3)-[alpha-D-Man-(1-&gt;6)]-alpha-D-Man-(1-&gt;6)]-beta-D-Man-(1-&gt;4)-beta-D-GlcNAc-(1-&gt;4)-beta-D-GlcNAc)-L-asparaginyl-[protein] (N-glucan mannose isomer 5A1,2) + 3 beta-D-mannose. The catalysed reaction is N(4)-(alpha-D-Man-(1-&gt;2)-alpha-D-Man-(1-&gt;2)-alpha-D-Man-(1-&gt;3)-[alpha-D-Man-(1-&gt;2)-alpha-D-Man-(1-&gt;3)-[alpha-D-Man-(1-&gt;2)-alpha-D-Man-(1-&gt;6)]-alpha-D-Man-(1-&gt;6)]-beta-D-Man-(1-&gt;4)-beta-D-GlcNAc-(1-&gt;4)-beta-D-GlcNAc)-L-asparaginyl-[protein] (N-glucan mannose isomer 9A1,2,3B1,2,3) + H2O = N(4)-(alpha-D-Man-(1-&gt;2)-alpha-D-Man-(1-&gt;2)-alpha-D-Man-(1-&gt;3)-[alpha-D-Man-(1-&gt;3)-[alpha-D-Man-(1-&gt;2)-alpha-D-Man-(1-&gt;6)]-alpha-D-Man-(1-&gt;6)]-beta-D-Man-(1-&gt;4)-beta-D-GlcNAc-(1-&gt;4)-beta-D-GlcNAc)-L-asparaginyl-[protein] (N-glucan mannose isomer 8A1,2,3B1,3) + beta-D-mannose. The protein operates within protein modification; protein glycosylation. Inhibited by kifunensine and 1-deoxymannojirimycin, but not by swainsonine. Functionally, class I alpha-mannosidase essential for early N-glycan processing. Progressively trims alpha-1,2-linked mannose residues. Produces Man(5)GlcNAc(2) from Man(8)GlcNAc(2), but only Man(6)GlcNAc(2) from Man(9)GlcNAc(2). Has difficulty acting on the terminal mannose of the b-branch. Involved in root development and cell wall biosynthesis. The polypeptide is Mannosyl-oligosaccharide 1,2-alpha-mannosidase MNS1 (MNS1) (Arabidopsis thaliana (Mouse-ear cress)).